A 1286-amino-acid chain; its full sequence is X-linked retinitis pigmentosa GTPase regulator-interacting protein 1 (1286 aa).

The segment at 144 to 193 (QVGHRQLHTAGAPVPEKPKRGPRDRLSYTAPPSFKEHATNENRGEVASKP) is disordered. Basic and acidic residues-rich tracts occupy residues 159–169 (EKPKRGPRDRL) and 177–189 (FKEHATNENRGEV). Residues 294–584 (KAQLTEVQEA…LEGILRSHDL (291 aa)) are a coiled coil. The 126-residue stretch at 781–906 (GGRKAQEEEF…AKNESIKGDF (126 aa)) folds into the C2 domain. Disordered regions lie at residues 934 to 1008 (SFLK…RKHG) and 1058 to 1108 (EEEE…PMSQ). Basic and acidic residues-rich tracts occupy residues 940–960 (AQTKGKDTKDSSKISSEEEKA), 988–998 (HGGERKEKEHQ), and 1070–1084 (KQKEPLHPVNDKESS). A compositionally biased stretch (polar residues) spans 1085-1096 (EQGSEVSEAQTT). Residues 1091–1281 (SEAQTTDSDD…VLHAIYKEMT (191 aa)) are interaction with RPGR.

The protein belongs to the RPGRIP1 family. As to quaternary structure, forms homodimers and elongated homopolymers. Interacts with RPGR. Interacts with NPHP4. Interacts with NEK4. Interacts with SPATA7. Interacts with CEP290/NPHP6; mediating the association between RPGR and CEP290/NPHP6. Strong expression in retina, with weaker expression in testis. Expressed in other neurons such as amacrine cells. Colocalizes with RGPR in the outer segment of rod photoreceptors and cone outer segments.

Its subcellular location is the cell projection. The protein resides in the cilium. May function as scaffolding protein. Required for normal location of RPGR at the connecting cilium of photoreceptor cells. Required for normal disk morphogenesis and disk organization in the outer segment of photoreceptor cells and for survival of photoreceptor cells. The protein is X-linked retinitis pigmentosa GTPase regulator-interacting protein 1 (RPGRIP1) of Homo sapiens (Human).